Here is a 585-residue protein sequence, read N- to C-terminus: Arginine--tRNA ligase (585 aa).

Positions 126 to 136 match the 'HIGH' region motif; the sequence is PNIAKEMHVGH.

This sequence belongs to the class-I aminoacyl-tRNA synthetase family. In terms of assembly, monomer.

It localises to the cytoplasm. The enzyme catalyses tRNA(Arg) + L-arginine + ATP = L-arginyl-tRNA(Arg) + AMP + diphosphate. This is Arginine--tRNA ligase from Rippkaea orientalis (strain PCC 8801 / RF-1) (Cyanothece sp. (strain PCC 8801)).